The primary structure comprises 82 residues: Quinohemoprotein amine dehydrogenase subunit gamma (82 aa).

Residues 7–16 (CTTSFDPGWE) constitute a cross-link (4-cysteinyl-glutamic acid (Cys-Glu)). Cross-links (3-cysteinyl-aspartic acid (Cys-Asp)) lie at residues 27-33 (CQPMEAD) and 41-49 (CWWPAQVAD). Asp-33 (proton acceptor) is an active-site residue. The 4'-cysteinyl-tryptophylquinone (Cys-Trp) cross-link spans 37–43 (CADPCWW). A Tryptophylquinone modification is found at Trp-43.

This sequence belongs to the quinohemoprotein amine dehydrogenase subunit gamma family. In terms of assembly, heterotrimer of an alpha, a beta and a gamma subunit. Requires cysteine tryptophylquinone residue as cofactor. In terms of processing, the cysteine tryptophylquinone (CTQ) is generated by oxidation of the indole ring of a tryptophan residue to form tryptophylquinone, followed by covalent cross-linking with a cysteine residue.

The protein resides in the periplasm. It carries out the reaction 2 Fe(III)-[cytochrome c550] + an aliphatic amine + H2O = 2 Fe(II)-[cytochrome c550] + an aldehyde + NH4(+) + 2 H(+). With respect to regulation, inhibited by carbonyl reagents such as hydrazine, hydroxylamine, phenylhydrazine and semicarbazide. Functionally, catalyzes the oxidative deamination of a wide range of primary aliphatic and aromatic amines. The physiological electron acceptor is the constitutive cytochrome c550. The sequence is that of Quinohemoprotein amine dehydrogenase subunit gamma (qhnDH) from Paracoccus denitrificans.